A 100-amino-acid chain; its full sequence is Aspartyl/glutamyl-tRNA(Asn/Gln) amidotransferase subunit C (100 aa).

The protein belongs to the GatC family. As to quaternary structure, heterotrimer of A, B and C subunits.

The enzyme catalyses L-glutamyl-tRNA(Gln) + L-glutamine + ATP + H2O = L-glutaminyl-tRNA(Gln) + L-glutamate + ADP + phosphate + H(+). It carries out the reaction L-aspartyl-tRNA(Asn) + L-glutamine + ATP + H2O = L-asparaginyl-tRNA(Asn) + L-glutamate + ADP + phosphate + 2 H(+). Allows the formation of correctly charged Asn-tRNA(Asn) or Gln-tRNA(Gln) through the transamidation of misacylated Asp-tRNA(Asn) or Glu-tRNA(Gln) in organisms which lack either or both of asparaginyl-tRNA or glutaminyl-tRNA synthetases. The reaction takes place in the presence of glutamine and ATP through an activated phospho-Asp-tRNA(Asn) or phospho-Glu-tRNA(Gln). The protein is Aspartyl/glutamyl-tRNA(Asn/Gln) amidotransferase subunit C of Dictyoglomus thermophilum (strain ATCC 35947 / DSM 3960 / H-6-12).